We begin with the raw amino-acid sequence, 540 residues long: Bifunctional pantoate ligase/cytidylate kinase (540 aa).

Positions 1–280 are pantoate--beta-alanine ligase; that stretch reads MQWLRTVAAL…VGQTRLIDNL (280 aa). An ATP-binding site is contributed by 28–35; it reads MGSLHEGH. The Proton donor role is filled by His-35. Gln-59 contributes to the (R)-pantoate binding site. Gln-59 provides a ligand contact to beta-alanine. 150-153 contacts ATP; that stretch reads GQKD. Gln-156 is a binding site for (R)-pantoate. ATP-binding positions include Val-179 and 187 to 190; that span reads YSSR. A cytidylate kinase region spans residues 281–540; it reads LLSPEGVDPL…RSGAAHFDII (260 aa). Positions 288–307 are disordered; that stretch reads DPLPQEQQSAVPPSPKRGRR.

In the N-terminal section; belongs to the pantothenate synthetase family. It in the C-terminal section; belongs to the cytidylate kinase family. Type 1 subfamily.

The protein resides in the cytoplasm. It carries out the reaction (R)-pantoate + beta-alanine + ATP = (R)-pantothenate + AMP + diphosphate + H(+). The catalysed reaction is CMP + ATP = CDP + ADP. The enzyme catalyses dCMP + ATP = dCDP + ADP. It functions in the pathway cofactor biosynthesis; (R)-pantothenate biosynthesis; (R)-pantothenate from (R)-pantoate and beta-alanine: step 1/1. In terms of biological role, catalyzes the condensation of pantoate with beta-alanine in an ATP-dependent reaction via a pantoyl-adenylate intermediate. Its function is as follows. Catalyzes the transfer of a phosphate group from ATP to either CMP or dCMP to form CDP or dCDP and ADP, respectively. The protein is Bifunctional pantoate ligase/cytidylate kinase of Synechococcus sp. (strain JA-3-3Ab) (Cyanobacteria bacterium Yellowstone A-Prime).